Consider the following 166-residue polypeptide: Endoribonuclease YbeY (166 aa).

Zn(2+) contacts are provided by histidine 132, histidine 136, and histidine 142.

This sequence belongs to the endoribonuclease YbeY family. Zn(2+) is required as a cofactor.

Its subcellular location is the cytoplasm. Its function is as follows. Single strand-specific metallo-endoribonuclease involved in late-stage 70S ribosome quality control and in maturation of the 3' terminus of the 16S rRNA. In Clostridium botulinum (strain Langeland / NCTC 10281 / Type F), this protein is Endoribonuclease YbeY.